The following is a 1232-amino-acid chain: MVHPVQVGKRTRMSFSRLKEVGQMPNLIEVQLDSYDWFLKEGLQEVFDDINPIQDYTGNLNLEFVGYKLDLDSIKYSVEECKERDSTYAAPLKVKVRLLNKETGEIKEQEVFMGDFPLMTEQGTFIINGAERVIVSQLVRSPGVYYDMTVDKTGSKLFSATVIPNRGAWLEYETDSNNIIYVRIDKTRKLPITILARALGYGTDAEIIEFFGEDERLKATIEKDNTKTREEALLEIYKRLRPGEPPTVDSAESLIESLFFDAKRYDLSRVGRYKFNKKLAIHLRITNQIADQDIVNPQTGEILVQKGEKIDKDKAIEIQNCGINEVYIKIDDKSFKVIGNHFVDIHSLVPFDISDLNIKEYVFYPVLKEILDNYADEESIKEEIRKNIYRLIPKHIIREDIYATINYELGLSYDIGYKDDIDHLGNRRLRSVGELLQNQFRIGLSRMERVVKERMTIQDQEVITPQALINIRPVAASIKEFFGSSQLSQFMDQTNPLSELTHKRRLSALGPGGLSRERAGFEVRDVHHSHYGRMCPIETPEGPNIGLINSLATFAKVNEYGFIETPYRRIDPKNKRATNDIVYMTADEEDLYVIARSDEPIDENGYFIDDKVTVRAKEEVLVVPVSEVEYMDISPRQLVSVATAMIPFLENDDASRALMGSNMQRQAVPLLKPQAPIVGTGIEYKAATDSGVLPKAKNAGTVVYVSADEIRVRRDSDGGIDKYKLLKFKRSNQGTCINQRPIVSKGEVVAKETLLADGPSTDLGEIALGKNILMGFITWEGYNYEDAMLISEQLVKEDVFTSIHIEEYEAEARDTKLGPEEITRDIPNVGEEALKDIDERGIIRIGAEVRSGDILVGKVTPKGETELTAEERLLRAIFGEKAREVRDTSLRVPHGEAGIIVDVKIFTRENGDELPPGVNKLVRCYIAQKRKISVGDKMAGRHGNKGVISRVLPEEDMPFLPDGRPLQICLNPLGVPSRMNIGQVLEVHLGLAASKLGWHIATPVFDGAIESDIVDCLRKAGYSEDGKTVLYDGRTGEPFDNRVTVGYMYILKLAHLVDDKIHARSTGPYSLVTQQPLGGKAQFGGQRFGEMEVWALEAYGAAHTLQEILTVKSDDVVGRVKTYEAIVKGENIPEPGVPESFKVLIKELQALCLDVKVLNDDNQEIKLKESVDEDADELEVNIEGTENQPEEKEEKEKEDSDEYDDLREEDVEPDLEELSLDDLDLDDFGDEH.

The interval 1170–1232 (SVDEDADELE…LDLDDFGDEH (63 aa)) is disordered. The span at 1171–1180 (VDEDADELEV) shows a compositional bias: acidic residues. Basic and acidic residues predominate over residues 1189 to 1198 (PEEKEEKEKE). Residues 1199 to 1232 (DSDEYDDLREEDVEPDLEELSLDDLDLDDFGDEH) are compositionally biased toward acidic residues.

Belongs to the RNA polymerase beta chain family. As to quaternary structure, the RNAP catalytic core consists of 2 alpha, 1 beta, 1 beta' and 1 omega subunit. When a sigma factor is associated with the core the holoenzyme is formed, which can initiate transcription.

The enzyme catalyses RNA(n) + a ribonucleoside 5'-triphosphate = RNA(n+1) + diphosphate. DNA-dependent RNA polymerase catalyzes the transcription of DNA into RNA using the four ribonucleoside triphosphates as substrates. This is DNA-directed RNA polymerase subunit beta from Clostridium botulinum (strain Kyoto / Type A2).